The primary structure comprises 486 residues: Aspartyl/glutamyl-tRNA(Asn/Gln) amidotransferase subunit B (486 aa).

It belongs to the GatB/GatE family. GatB subfamily. Heterotrimer of A, B and C subunits.

It carries out the reaction L-glutamyl-tRNA(Gln) + L-glutamine + ATP + H2O = L-glutaminyl-tRNA(Gln) + L-glutamate + ADP + phosphate + H(+). It catalyses the reaction L-aspartyl-tRNA(Asn) + L-glutamine + ATP + H2O = L-asparaginyl-tRNA(Asn) + L-glutamate + ADP + phosphate + 2 H(+). In terms of biological role, allows the formation of correctly charged Asn-tRNA(Asn) or Gln-tRNA(Gln) through the transamidation of misacylated Asp-tRNA(Asn) or Glu-tRNA(Gln) in organisms which lack either or both of asparaginyl-tRNA or glutaminyl-tRNA synthetases. The reaction takes place in the presence of glutamine and ATP through an activated phospho-Asp-tRNA(Asn) or phospho-Glu-tRNA(Gln). The protein is Aspartyl/glutamyl-tRNA(Asn/Gln) amidotransferase subunit B of Leptospira interrogans serogroup Icterohaemorrhagiae serovar Lai (strain 56601).